Reading from the N-terminus, the 422-residue chain is MILIKNAKILTPKGIVEGNLKVEGKKISEIGGKAVKSDVVIDGSRKAVIPGFFNTHTHAAMTLFRSYADDMQLHEWLEKKIWPLEAKLDDKAVYWGTKLACVEMLKSGTVFFNDMYFFPEAIARAAEECGIRACVSAAFFDFFNPDLLELNLKNAVKSLREIEKYDVLRAIGPHAVYTVSLDGLRRAAEIAEEMDIFMHFHLAETEKEVLDFKKQHGKLIVQALDEIGFLSKRLIAAHSVWLEDAEIEILAKKGVSVAHCPASNMKLCVGKAIRYEAMKRAGVNFTLATDGAASNNNLDMLEEMKFAALLQKFHHSNPTLLKAEEVFEAATLNGAKAFGIKSGVIKEGYEADIVLVDLAKPYMQPEHSLIANLVYAASSGCVDTVIVKGEVVVEGGVFRSEEEELKIIEKANEVAKRLTGSA.

Residues His-56 and His-58 each contribute to the Zn(2+) site. Positions 85 and 174 each coordinate substrate. His-201 provides a ligand contact to Zn(2+). The substrate site is built by Glu-204 and Asp-290. Asp-290 is a binding site for Zn(2+).

This sequence belongs to the metallo-dependent hydrolases superfamily. MTA/SAH deaminase family. The cofactor is Zn(2+).

It catalyses the reaction S-adenosyl-L-homocysteine + H2O + H(+) = S-inosyl-L-homocysteine + NH4(+). It carries out the reaction S-methyl-5'-thioadenosine + H2O + H(+) = S-methyl-5'-thioinosine + NH4(+). Its function is as follows. Catalyzes the deamination of 5-methylthioadenosine and S-adenosyl-L-homocysteine into 5-methylthioinosine and S-inosyl-L-homocysteine, respectively. Is also able to deaminate adenosine. The chain is 5-methylthioadenosine/S-adenosylhomocysteine deaminase 1 from Archaeoglobus fulgidus (strain ATCC 49558 / DSM 4304 / JCM 9628 / NBRC 100126 / VC-16).